The following is a 603-amino-acid chain: Coagulation factor XII (603 aa).

The N-terminal stretch at 1 to 18 (GRLLLGSLLVSLESALSA) is a signal peptide. The region spanning 41 to 89 (VTGEPCYFPFQYNRQLYHHCIHKGRPGPRPWCATTPNFDQDQQWAYCLE) is the Fibronectin type-II domain. 20 disulfide bridges follow: Cys-46/Cys-72, Cys-60/Cys-87, Cys-97/Cys-109, Cys-103/Cys-118, Cys-120/Cys-129, Cys-134/Cys-162, Cys-160/Cys-169, Cys-177/Cys-188, Cys-182/Cys-197, Cys-199/Cys-208, Cys-216/Cys-294, Cys-237/Cys-276, Cys-265/Cys-289, Cys-345/Cys-472, Cys-383/Cys-399, Cys-391/Cys-461, Cys-422/Cys-425, Cys-488/Cys-557, Cys-520/Cys-536, and Cys-547/Cys-578. One can recognise an EGF-like 1 domain in the interval 93 to 130 (VKDHCSKHNPCQRGGICVNTLSSPHCLCPDHLTGKHCQ). The 41-residue stretch at 132 to 172 (EKCFEPQLHRFFHENEIWFRTGPAGVAKCHCKGPDAHCKQM) folds into the Fibronectin type-I domain. Residues 173 to 209 (HSQECQTNPCLNGGRCLEVEGHHLCDCPMGYTGPFCD) form the EGF-like 2 domain. The 79-residue stretch at 216 to 294 (CYEGRGVSYR…SWEYCDLAQC (79 aa)) folds into the Kringle domain. 2 N-linked (GlcNAc...) asparagine glycosylation sites follow: Asn-248 and Asn-270. The 244-residue stretch at 359–602 (IVGGLVALPG…YLTWIQKHTA (244 aa)) folds into the Peptidase S1 domain. The Charge relay system role is filled by His-398. Asn-419 carries an N-linked (GlcNAc...) asparagine glycan. The active-site Charge relay system is the Asp-447. Residue Ser-551 is the Charge relay system of the active site.

This sequence belongs to the peptidase S1 family. As to quaternary structure, interacts with HRG; the interaction, which is enhanced in the presence of zinc ions and inhibited by heparin-binding, inhibits factor XII autoactivation and contact-initiated coagulation. Post-translationally, O- and N-glycosylated.

The protein localises to the secreted. It catalyses the reaction Selective cleavage of Arg-|-Ile bonds in factor VII to form factor VIIa and factor XI to form factor XIa.. Its activity is regulated as follows. Activity is promoted in the presence of negatively charged surfaces. Factor XII is a serum glycoprotein that participates in the initiation of blood coagulation, fibrinolysis, and the generation of bradykinin and angiotensin. Prekallikrein is cleaved by factor XII to form kallikrein, which then cleaves factor XII first to alpha-factor XIIa and then trypsin cleaves it to beta-factor XIIa. Alpha-factor XIIa activates factor XI to factor XIa. This chain is Coagulation factor XII (F12), found in Cavia porcellus (Guinea pig).